The primary structure comprises 667 residues: UvrABC system protein B (667 aa).

The Helicase ATP-binding domain occupies 28-185 (NNFKQGLKEQ…NKLIELKYQR (158 aa)). Residue 41–48 (GATGTGKT) participates in ATP binding. The short motif at 94 to 117 (YYDYYQPEAYVASSDTYIEKDSKI) is the Beta-hairpin element. In terms of domain architecture, Helicase C-terminal spans 432-594 (QMDDLYFEIK…VTPTALNKTI (163 aa)). The 36-residue stretch at 629-664 (NKEIKRLQKTMKEAAKALDFEKAATLRDLILDLEKK) folds into the UVR domain.

Belongs to the UvrB family. Forms a heterotetramer with UvrA during the search for lesions. Interacts with UvrC in an incision complex.

Its subcellular location is the cytoplasm. Functionally, the UvrABC repair system catalyzes the recognition and processing of DNA lesions. A damage recognition complex composed of 2 UvrA and 2 UvrB subunits scans DNA for abnormalities. Upon binding of the UvrA(2)B(2) complex to a putative damaged site, the DNA wraps around one UvrB monomer. DNA wrap is dependent on ATP binding by UvrB and probably causes local melting of the DNA helix, facilitating insertion of UvrB beta-hairpin between the DNA strands. Then UvrB probes one DNA strand for the presence of a lesion. If a lesion is found the UvrA subunits dissociate and the UvrB-DNA preincision complex is formed. This complex is subsequently bound by UvrC and the second UvrB is released. If no lesion is found, the DNA wraps around the other UvrB subunit that will check the other stand for damage. This is UvrABC system protein B from Aster yellows witches'-broom phytoplasma (strain AYWB).